A 198-amino-acid polypeptide reads, in one-letter code: MKKVIPLFIIAAGLVIAGYGGFKLIDTNTKTEQTLKEAKLAAKKPQEASGTKNSTDQAKNKASFKPETGQASGILEIPKINAELPIVEGTDADDLEKGVGHYKDSYYPDENGQIVLSGHRDTVFRRTGELEKGDQLRLLLSYGEFTYEIVKTKIVDKDDTSIITLQHEKEELILTTCYPFSYVGNAPKRYIIYGKRVT.

Residues L7 to I25 form a helical membrane-spanning segment. Over residues K36 to Q46 the composition is skewed to basic and acidic residues. The interval K36–E67 is disordered. The segment covering A48–Q57 has biased composition (polar residues). The active-site Proton donor/acceptor is H119. The active-site Acyl-thioester intermediate is the C177.

The protein belongs to the bacterial sortase family. Class D subfamily.

The protein localises to the cell membrane. Transpeptidase that anchors surface proteins to the cell wall. Recognizes and modifies its substrate by proteolytic cleavage of a C-terminal sorting signal. Following cleavage, a covalent intermediate is formed via a thioester bond between the sortase and its substrate, which is then transferred and covalently attached to the cell wall. This sortase recognizes a Leu-Pro-Asp-Thr-Ser/Ala (LPDTS/A) motif. It has two substrates, YhcR and YfkN. The sequence is that of Sortase D from Bacillus subtilis (strain 168).